We begin with the raw amino-acid sequence, 72 residues long: Large ribosomal subunit protein bL31 (72 aa).

The protein belongs to the bacterial ribosomal protein bL31 family. Type A subfamily. In terms of assembly, part of the 50S ribosomal subunit.

Binds the 23S rRNA. The protein is Large ribosomal subunit protein bL31 of Deinococcus geothermalis (strain DSM 11300 / CIP 105573 / AG-3a).